A 296-amino-acid chain; its full sequence is ATP phosphoribosyltransferase (296 aa).

It belongs to the ATP phosphoribosyltransferase family.

The protein localises to the cytoplasm. The enzyme catalyses 1-(5-phospho-beta-D-ribosyl)-ATP + diphosphate = 5-phospho-alpha-D-ribose 1-diphosphate + ATP. Its pathway is amino-acid biosynthesis; L-histidine biosynthesis; L-histidine from 5-phospho-alpha-D-ribose 1-diphosphate: step 1/9. Catalyzes the condensation of ATP and 5-phosphoribose 1-diphosphate to form N'-(5'-phosphoribosyl)-ATP (PR-ATP). Has a crucial role in the pathway because the rate of histidine biosynthesis seems to be controlled primarily by regulation of the enzymatic activity. In Yarrowia lipolytica (strain CLIB 122 / E 150) (Yeast), this protein is ATP phosphoribosyltransferase (HIS1).